Here is a 568-residue protein sequence, read N- to C-terminus: Estrogen receptor beta-1 (568 aa).

The modulating stretch occupies residues 12-169; the sequence is SEYAEGDSSL…SLRGKADMHY (158 aa). 2 consecutive NR C4-type zinc fingers follow at residues 170–190 and 206–230; these read CAVC…CEGC and CPAT…LRKC. The segment at residues 170 to 235 is a DNA-binding region (nuclear receptor); sequence CAVCSDYASG…RLRKCYEVGM (66 aa). Residues 292–528 enclose the NR LBD domain; the sequence is SPEELIARIM…DLLLEMLDAH (237 aa).

Belongs to the nuclear hormone receptor family. NR3 subfamily. In terms of assembly, binds DNA as a homodimer. Can form a heterodimer with ER-alpha.

The protein localises to the nucleus. Binds estrogens with an affinity similar to that of ER-alpha, and activates expression of reporter genes containing estrogen response elements (ERE) in an estrogen-dependent manner. The chain is Estrogen receptor beta-1 (esr2a) from Carassius auratus (Goldfish).